A 363-amino-acid chain; its full sequence is Pyrimidine monooxygenase RutA (363 aa).

FMN-binding positions include 49 to 50 (IK), Asn-115, Glu-124, 140 to 141 (RY), and Ser-190.

This sequence belongs to the NtaA/SnaA/DszA monooxygenase family. RutA subfamily.

It carries out the reaction uracil + FMNH2 + NADH + O2 = (Z)-3-ureidoacrylate + FMN + NAD(+) + H2O + H(+). It catalyses the reaction thymine + FMNH2 + NADH + O2 = (Z)-2-methylureidoacrylate + FMN + NAD(+) + H2O + H(+). Catalyzes the pyrimidine ring opening between N-3 and C-4 by an unusual flavin hydroperoxide-catalyzed mechanism, adding oxygen atoms in the process to yield ureidoacrylate peracid, that immediately reacts with FMN forming ureidoacrylate and FMN-N(5)-oxide. The FMN-N(5)-oxide reacts spontaneously with NADH to produce FMN. Requires the flavin reductase RutF to regenerate FMN in vivo. In Escherichia coli O157:H7 (strain EC4115 / EHEC), this protein is Pyrimidine monooxygenase RutA.